The following is a 173-amino-acid chain: uncharacterized protein (173 aa).

This is an uncharacterized protein from Acanthamoeba polyphaga (Amoeba).